Consider the following 327-residue polypeptide: MAKPAKRVAVTGAAGQIAYSLLFRIANGDLLGKDQPVILQLLDLPQAQAAVKGVVMELDDCAFPLLAGVVITDDPKVAFKDADVALLVGARPRSKGMERKDLLSANAEIFTVQGAALNEVASRDVKVLVVGNPANTNAYIAMKSAPDLPKKNFTAMLRLDHNRALSQLAAKSGKPVASIEKLAVWGNHSPTMYPDFRFATAEGESLLKLINDDVWNRDTFIPTVGKRGAAIIEARGLSSAASAANAAIDHVRDWVLGTNGKWVTMGIPSDGSYGIPEDIIYGVPVICENGEYKRVEGLEIDAFSREKMDGTLAELLEERDGVAHLLK.

12–18 serves as a coordination point for NAD(+); that stretch reads GAAGQIA. Residues R93 and R99 each coordinate substrate. NAD(+) contacts are provided by residues N106, Q113, and 130-132; that span reads VGN. The substrate site is built by N132 and R163. The active-site Proton acceptor is the H188.

Belongs to the LDH/MDH superfamily. MDH type 2 family.

It carries out the reaction (S)-malate + NAD(+) = oxaloacetate + NADH + H(+). Its function is as follows. Catalyzes the reversible oxidation of malate to oxaloacetate. The chain is Malate dehydrogenase from Burkholderia mallei (strain NCTC 10247).